An 82-amino-acid chain; its full sequence is Acyl carrier protein (82 aa).

Positions 4-79 (PEMEARLKQI…DALNYIEQKL (76 aa)) constitute a Carrier domain. Serine 39 is subject to O-(pantetheine 4'-phosphoryl)serine.

The protein belongs to the acyl carrier protein (ACP) family. 4'-phosphopantetheine is transferred from CoA to a specific serine of apo-ACP by AcpS. This modification is essential for activity because fatty acids are bound in thioester linkage to the sulfhydryl of the prosthetic group.

The protein localises to the cytoplasm. It functions in the pathway lipid metabolism; fatty acid biosynthesis. Functionally, carrier of the growing fatty acid chain in fatty acid biosynthesis. The polypeptide is Acyl carrier protein (Roseiflexus castenholzii (strain DSM 13941 / HLO8)).